The sequence spans 218 residues: dTTP/UTP pyrophosphatase (218 aa).

Catalysis depends on Asp-76, which acts as the Proton acceptor.

It belongs to the Maf family. YhdE subfamily. The cofactor is a divalent metal cation.

It is found in the cytoplasm. The catalysed reaction is dTTP + H2O = dTMP + diphosphate + H(+). It catalyses the reaction UTP + H2O = UMP + diphosphate + H(+). Nucleoside triphosphate pyrophosphatase that hydrolyzes dTTP and UTP. May have a dual role in cell division arrest and in preventing the incorporation of modified nucleotides into cellular nucleic acids. This chain is dTTP/UTP pyrophosphatase, found in Cytophaga hutchinsonii (strain ATCC 33406 / DSM 1761 / CIP 103989 / NBRC 15051 / NCIMB 9469 / D465).